Consider the following 233-residue polypeptide: Lectin (233 aa).

Asn-26 and Asn-108 each carry an N-linked (GlcNAc...) asparagine glycan. Mn(2+) is bound by residues Glu-118 and Asp-120. Residues Asp-120, Trp-122, Asn-124, and Glu-129 each coordinate Ca(2+). Mn(2+) is bound by residues Glu-129 and His-134.

Belongs to the leguminous lectin family. As to quaternary structure, monomer.

Its subcellular location is the secreted. Has metal-independent hemagglutinating activity towards erythrocytes from rabbit and human. Hemagglutinating activity is inhibited by glycoproteins fetuin, asialo-fetuin, thyroglobulin and azocasein but not by free carbohydrates. Inhibits ADP- and epinephrin-induced but not collagen-, fibrinogen, thrombin- or arachidonic acid-induced platelet aggregation in vitro. Has anticoagulant activity in vitro. In Bauhinia forficata (Brazilian orchid-tree), this protein is Lectin.